Reading from the N-terminus, the 491-residue chain is Monothiol glutaredoxin-S11 (491 aa).

Glutaredoxin domains are found at residues Asn-151 to Leu-253, Lys-287 to Ala-389, and Glu-394 to Glu-491. Lys-411 contributes to the glutathione binding site. Cys-419 serves as a coordination point for [2Fe-2S] cluster. Glutathione contacts are provided by residues Arg-448, Phe-460, and Cys-473 to Asp-474.

This sequence belongs to the glutaredoxin family. CGFS subfamily.

The protein resides in the cytoplasm. In terms of biological role, may only reduce GSH-thiol disulfides, but not protein disulfides. The polypeptide is Monothiol glutaredoxin-S11 (GRXS11) (Oryza sativa subsp. japonica (Rice)).